The sequence spans 341 residues: Gibberellin 2-beta-dioxygenase 2 (341 aa).

The 105-residue stretch at 179 to 283 (KSDSCLRLNH…RISMIYFGGP (105 aa)) folds into the Fe2OG dioxygenase domain. Fe cation contacts are provided by His207, Asp209, and His264. Arg274 is a catalytic residue. Arg274 serves as a coordination point for 2-oxoglutarate.

This sequence belongs to the iron/ascorbate-dependent oxidoreductase family. GA2OX subfamily. Fe(2+) is required as a cofactor. Preferentially expressed in flowers, siliques, and upper stems. Expressed in cotyledons, at the base of the shoot apical meristem and developing leaf primordia.

The enzyme catalyses gibberellin A1 + 2-oxoglutarate + O2 = gibberellin A8 + succinate + CO2. The protein operates within plant hormone biosynthesis; gibberellin biosynthesis. Functionally, catalyzes the 2-beta-hydroxylation of several biologically active gibberellins, leading to the homeostatic regulation of their endogenous level. Catabolism of gibberellins (GAs) plays a central role in plant development. Converts GA9/GA20 to GA51/GA29 and GA4/GA1 to GA34/GA8. The protein is Gibberellin 2-beta-dioxygenase 2 (GA2OX2) of Arabidopsis thaliana (Mouse-ear cress).